The sequence spans 137 residues: Small ribosomal subunit protein uS12 (137 aa).

Residues 1-55 form a disordered region; that stretch reads MPTINQLVRKPRQSKSKKSDSPALNRNFNSKKKKFTDLNSPQKRGVCTRVGTMTP. Position 102 is a 3-methylthioaspartic acid (D102). The interval 118–137 is disordered; it reads SGVDGRRQGRSLYGTKKPKK.

The protein belongs to the universal ribosomal protein uS12 family. In terms of assembly, part of the 30S ribosomal subunit. Contacts proteins S8 and S17. May interact with IF1 in the 30S initiation complex.

Functionally, with S4 and S5 plays an important role in translational accuracy. Interacts with and stabilizes bases of the 16S rRNA that are involved in tRNA selection in the A site and with the mRNA backbone. Located at the interface of the 30S and 50S subunits, it traverses the body of the 30S subunit contacting proteins on the other side and probably holding the rRNA structure together. The combined cluster of proteins S8, S12 and S17 appears to hold together the shoulder and platform of the 30S subunit. This is Small ribosomal subunit protein uS12 from Staphylococcus saprophyticus subsp. saprophyticus (strain ATCC 15305 / DSM 20229 / NCIMB 8711 / NCTC 7292 / S-41).